We begin with the raw amino-acid sequence, 209 residues long: Large ribosomal subunit protein uL3 (209 aa).

Residues 133 to 153 (THGNSLSHRVPGSIGQNQTPG) form a disordered region. At Gln-150 the chain carries N5-methylglutamine.

The protein belongs to the universal ribosomal protein uL3 family. In terms of assembly, part of the 50S ribosomal subunit. Forms a cluster with proteins L14 and L19. Methylated by PrmB.

Its function is as follows. One of the primary rRNA binding proteins, it binds directly near the 3'-end of the 23S rRNA, where it nucleates assembly of the 50S subunit. The polypeptide is Large ribosomal subunit protein uL3 (Serratia proteamaculans (strain 568)).